The primary structure comprises 216 residues: Pyrophosphatase PpaX (216 aa).

Asp9 acts as the Nucleophile in catalysis.

The protein belongs to the HAD-like hydrolase superfamily. PpaX family. Mg(2+) is required as a cofactor.

The enzyme catalyses diphosphate + H2O = 2 phosphate + H(+). Functionally, hydrolyzes pyrophosphate formed during P-Ser-HPr dephosphorylation by HPrK/P. Might play a role in controlling the intracellular pyrophosphate pool. This chain is Pyrophosphatase PpaX, found in Bacillus cereus (strain ATCC 10987 / NRS 248).